The following is a 433-amino-acid chain: Putative purine permease YbbY (433 aa).

Topologically, residues 1–17 are periplasmic; it reads MFNFAVSRESLLSGFQW. The chain crosses the membrane as a helical span at residues 18 to 38; sequence FFFIFCNTVVVPPTLLSAFQL. The Cytoplasmic segment spans residues 39 to 42; that stretch reads PQSS. Residues 43-63 traverse the membrane as a helical segment; the sequence is LLTLTQYAFLATALACFAQAF. At 64 to 68 the chain is on the periplasmic side; that stretch reads CGHRR. The chain crosses the membrane as a helical span at residues 69–89; the sequence is AIMEGPGGLWWGTILTITLGE. The Cytoplasmic segment spans residues 90 to 102; that stretch reads ASRGTPINDIATS. Residues 103 to 123 traverse the membrane as a helical segment; that stretch reads LAVGIALSGVLTMLIGFSGLG. Over 124-130 the chain is Periplasmic; it reads HRLARLF. A helical membrane pass occupies residues 131-151; sequence TPSVMVLFMLMLGAQLTTIFF. Residues 152 to 169 are Cytoplasmic-facing; that stretch reads KGMLGLPFGIADPNFKIQ. A helical membrane pass occupies residues 170–190; that stretch reads LPPFALSVAVMCLVLAMIIFL. Over 191–196 the chain is Periplasmic; it reads PQRFAR. The chain crosses the membrane as a helical span at residues 197–217; that stretch reads YGLLVGTITGWLLWYFCFPSS. Topologically, residues 218–230 are cytoplasmic; sequence HSLSGELHWQWFP. A helical membrane pass occupies residues 231–251; that stretch reads LGSGGALSPGIILTAVITGLV. Residues 252-288 are Periplasmic-facing; it reads NISNTYGAIRGTDVFYPQQGAGNTRYRRSFVATGFMT. Residues 289 to 309 traverse the membrane as a helical segment; sequence LITVPLAVIPFSPFVSSIGLL. Residues 310 to 319 are Cytoplasmic-facing; it reads TQTGDYTRRS. A helical membrane pass occupies residues 320 to 340; the sequence is FIYGSVICLLVALVPALTRLF. The Periplasmic segment spans residues 341 to 345; it reads CSIPL. The chain crosses the membrane as a helical span at residues 346-366; sequence PVSSAVMLVSYLPLLFSALVF. The Cytoplasmic segment spans residues 367–379; sequence SQQITFTARNIYR. The chain crosses the membrane as a helical span at residues 380–400; the sequence is LALPLFVGIFLMALPPVYLQD. Topologically, residues 401–407 are periplasmic; it reads LPLTLRP. A helical membrane pass occupies residues 408–428; it reads LLSNGLLVGILLAVLMDNLIP. Residues 429 to 433 are Cytoplasmic-facing; it reads WERIE.

This sequence belongs to the nucleobase:cation symporter-2 (NCS2) (TC 2.A.40) family.

Its subcellular location is the cell inner membrane. The sequence is that of Putative purine permease YbbY (ybbY) from Escherichia coli (strain K12).